Here is a 4655-residue protein sequence, read N- to C-terminus: Low-density lipoprotein receptor-related protein 2 (4655 aa).

Residues 1 to 25 form the signal peptide; that stretch reads MDRGPAAVACTLLLALVACLAPASG. Residues 26-4423 are Extracellular-facing; that stretch reads QECDSAHFRC…FSKGISPGTT (4398 aa). LDL-receptor class A domains follow at residues 27-63, 66-104, 107-143, 146-180, 182-218, 221-257, and 265-308; these read ECDS…IGCA, TCQQ…QDCS, TCSS…NDCQ, TCEQ…INCT, ICLH…HACN, TCGG…DGCE, and KCSP…KYCS. Intrachain disulfides connect C28–C40, C35–C53, C47–C62, C67–C80, C74–C93, C87–C103, C108–C120, C115–C133, C127–C142, C147–C157, C152–C170, C164–C179, C183–C195, C190–C208, C202–C217, C222–C234, C229–C247, C241–C256, C266–C279, C273–C292, and C286–C307. Residues N159 and N178 are each glycosylated (N-linked (GlcNAc...) asparagine). N-linked (GlcNAc...) asparagine glycosylation is found at N299, N300, N341, N388, and N463. LDL-receptor class B repeat units follow at residues 436–478, 479–521, 522–568, 569–613, 753–795, 796–837, 838–881, and 882–925; these read QRVF…DWVN, NKIY…DPTV, GYLF…DMIS, KRVY…FEGQ, STIF…DWIS, KNLY…HPFA, GYLF…DWAA, and SRLY…FGEH. N866 carries N-linked (GlcNAc...) asparagine glycosylation. The LDL-receptor class A 8 domain maps to 1025–1061; it reads QCGLFSFPCKNGRCVPNYYLCDGVDDCHDNSDEQLCG. Intrachain disulfides connect C1026–C1038, C1033–C1051, and C1045–C1060. N1064 carries an N-linked (GlcNAc...) asparagine glycan. LDL-receptor class A domains are found at residues 1066 to 1102, 1108 to 1144, 1148 to 1184, 1186 to 1223, 1229 to 1267, 1270 to 1306, and 1304 to 1349; these read TCSS…HNCP, SCLD…KNCN, TCQP…VGCV, NCTA…AGCP, MCHS…NACV, TCPS…KDCP, and DCPT…PLCN. 6 cysteine pairs are disulfide-bonded: C1067/C1079, C1074/C1092, C1086/C1101, C1109/C1121, C1116/C1134, and C1128/C1143. Ca(2+) contacts are provided by W1126, D1129, D1131, D1133, D1139, and E1140. N1144 carries an N-linked (GlcNAc...) asparagine glycan. Disulfide bonds link C1149-C1161, C1156-C1174, and C1168-C1183. N-linked (GlcNAc...) asparagine glycosylation occurs at N1186. Cystine bridges form between C1187/C1200, C1194/C1213, C1207/C1222, C1230/C1243, C1237/C1256, C1250/C1266, C1271/C1283, C1278/C1296, C1290/C1305, C1305/C1325, C1312/C1338, and C1332/C1348. Ca(2+) contacts are provided by D1208, V1210, D1212, D1218, and E1219. N-linked (GlcNAc...) asparagine glycans are attached at residues N1327, N1340, and N1383. An EGF-like 1; calcium-binding domain is found at 1390–1429; sequence DIDECDILGSCSQHCYNMRGSFRCSCDTGYMLESDGRTCK. 3 cysteine pairs are disulfide-bonded: C1394–C1404, C1400–C1413, and C1415–C1428. N1464, N1496, and N1550 each carry an N-linked (GlcNAc...) asparagine glycan. LDL-receptor class B repeat units lie at residues 1478–1520, 1521–1563, 1566–1609, 1610–1654, and 1655–1695; these read GRIF…DWVG, RNLY…DPRM, HLLF…DYPN, RLLY…FEDS, and VYWT…VHPS. N1675 carries N-linked (GlcNAc...) asparagine glycosylation. An EGF-like 2 domain is found at 1700–1741; the sequence is SVNPCAFSRCSHLCLLSSQGPHFYSCVCPSGWSLSPDLLNCL. 3 cysteine pairs are disulfide-bonded: C1704-C1713, C1709-C1725, and C1727-C1740. LDL-receptor class B repeat units lie at residues 1790-1832, 1833-1882, 1883-1930, 1931-1972, and 1973-2013; these read QYIY…DWIS, RNLY…DPAR, GKLY…DIEE, QKLY…HDSF, and LYYT…YHRR. N-linked (GlcNAc...) asparagine glycosylation occurs at N1810. N2055 carries an N-linked (GlcNAc...) asparagine glycan. LDL-receptor class B repeat units lie at residues 2107–2156, 2157–2201, 2202–2245, 2246–2289, 2431–2477, 2478–2518, 2519–2562, 2563–2604, and 2605–2646; these read GFIY…DWVA, GNLY…DPKN, RYLF…DRSD, GYVY…FENS, DRIY…DWIT, RRIY…DPCQ, GYLY…DYEE, DLLY…YGQY, and IYWT…VVKN. N-linked (GlcNAc...) asparagine glycosylation is found at N2177 and N2224. N2499 and N2547 each carry an N-linked (GlcNAc...) asparagine glycan. LDL-receptor class A domains lie at 2699-2737, 2740-2776, 2779-2818, 2821-2860, 2863-2900, 2905-2944, 2947-2989, 2992-3028, 3031-3069, and 3074-3110; these read RCGA…SVCA, TCSP…AGCL, DCNA…KNCP, TCQS…TYCT, TCSS…ASCG, TCLA…HQCQ, NCSD…QNCT, TCSE…RGCL, TCQQ…HLCH, and TCPP…KGCG. 18 disulfides stabilise this stretch: C2700–C2712, C2707–C2725, C2719–C2736, C2741–C2753, C2748–C2766, C2760–C2775, C2780–C2793, C2788–C2806, C2800–C2817, C2822–C2835, C2829–C2848, C2842–C2859, C2864–C2876, C2871–C2889, C2883–C2899, C2906–C2918, C2913–C2931, and C2925–C2943. An N-linked (GlcNAc...) asparagine glycan is attached at N2781. N2809 and N2810 each carry an N-linked (GlcNAc...) asparagine glycan. A glycan (N-linked (GlcNAc...) asparagine) is linked at N2947. Intrachain disulfides connect C2948-C2965, C2955-C2978, C2972-C2988, C2993-C3005, C3000-C3018, C3012-C3027, C3032-C3044, C3039-C3057, C3051-C3068, C3075-C3087, C3082-C3100, C3094-C3109, C3114-C3126, C3122-C3135, C3137-C3150, C3156-C3167, C3163-C3176, and C3178-C3191. N-linked (GlcNAc...) asparagine glycosylation occurs at N2987. Residues 3110–3151 enclose the EGF-like 3 domain; it reads GINECHDPSISGCDHNCTDTLTSFYCSCRPGYKLMSDKRTCV. N3125 is a glycosylation site (N-linked (GlcNAc...) asparagine). The 41-residue stretch at 3152–3192 folds into the EGF-like 4; calcium-binding domain; sequence DIDECTEMPFVCSQKCENVIGSYICKCAPGYLREPDGKTCR. N-linked (GlcNAc...) asparagine glycans are attached at residues N3211, N3257, N3315, and N3355. LDL-receptor class B repeat units follow at residues 3239-3281, 3282-3324, 3333-3376, 3377-3419, and 3420-3460; these read KRLY…DWVS, RKLY…DNPR, GYLY…DYTN, DLLY…FEDT, and IYWT…YHPY. Residue N3446 is glycosylated (N-linked (GlcNAc...) asparagine). LDL-receptor class A domains follow at residues 3511–3549, 3552–3590, 3593–3631, 3634–3672, 3677–3715, 3718–3755, 3758–3794, 3797–3833, 3841–3879, 3882–3921, and 3927–3963; these read MCSS…ALCP, FCRL…LLCE, HCDS…SHCA, TCRP…EECM, LCDN…QGCE, TCHP…ENCA, ECTE…RDCE, TCHP…ADCP, YCQA…HLCL, PCNS…EHCR, and PCTE…LGCN. 33 disulfides stabilise this stretch: C3512/C3525, C3519/C3538, C3532/C3548, C3553/C3565, C3560/C3578, C3572/C3589, C3594/C3606, C3601/C3619, C3613/C3630, C3635/C3647, C3642/C3660, C3654/C3671, C3678/C3692, C3686/C3705, C3699/C3714, C3719/C3732, C3727/C3745, C3739/C3754, C3759/C3771, C3766/C3784, C3778/C3793, C3798/C3810, C3805/C3823, C3817/C3832, C3842/C3854, C3849/C3867, C3861/C3878, C3883/C3896, C3891/C3909, C3903/C3920, C3928/C3940, C3935/C3953, and C3947/C3962. An N-linked (GlcNAc...) asparagine glycan is attached at N3564. A glycan (N-linked (GlcNAc...) asparagine) is linked at N3680. N-linked (GlcNAc...) asparagine glycosylation is present at N3978. An EGF-like 5; calcium-binding domain is found at 4007–4048; it reads DINECEQFGTCPQHCRNTKGSYECVCADGFTSMSDRPGKRCA. Cystine bridges form between C4011/C4021, C4017/C4030, and C4032/C4047. N-linked (GlcNAc...) asparagine glycosylation is present at N4068. LDL-receptor class B repeat units lie at residues 4154–4196, 4197–4240, and 4242–4283; these read RHIY…NPKL, GLMF…DYLN, and DRIY…FEDQ. An N-linked (GlcNAc...) asparagine glycan is attached at N4327. An EGF-like 6 domain is found at 4377-4411; the sequence is LPPPCRCMHGGNCYFDETDLPKCKCPSGYTGKYCE. 3 disulfide bridges follow: C4381/C4389, C4383/C4399, and C4401/C4410. Residues 4424–4446 form a helical membrane-spanning segment; that stretch reads AVAVLLTILLIVVIGALAIAGFF. Residues 4447–4655 are Cytoplasmic-facing; it reads HYRRTGSLLP…ANLVKEDSEV (209 aa). Positions 4453-4462 match the SH3-binding motif; the sequence is SLLPALPKLP. The short motif at 4456 to 4461 is the PxLPxI/L motif 1; mediates interaction with ANKRA2 element; the sequence is PALPKL. Residues 4459 to 4464 carry the PxLPxI/L motif 2; mediates interaction with ANKRA2 motif; that stretch reads PKLPSL. Phosphoserine occurs at positions 4463 and 4466. An Endocytosis signal motif is present at residues 4521–4526; that stretch reads FENPMY. A disordered region spans residues 4550 to 4574; sequence KNYGSPINPSEIVPETNPTSPAADG. A compositionally biased stretch (polar residues) spans 4565 to 4574; that stretch reads TNPTSPAADG. A Phosphoserine modification is found at S4569. An interaction with DAB2 region spans residues 4589–4602; that stretch reads QTTNFENPIYAQME. The NPXY motif signature appears at 4595–4598; sequence NPIY. The SH2-binding motif lies at 4598–4601; that stretch reads YAQM. The tract at residues 4601 to 4655 is disordered; that stretch reads MENEQKESVAATPPPSPSLPAKPKPPSRRDPTPTYSATEDTFKDTANLVKEDSEV. The SH3-binding motif lies at 4611-4622; sequence ATPPPSPSLPAK. Residues 4612-4624 are compositionally biased toward pro residues; the sequence is TPPPSPSLPAKPK. S4616 is modified (phosphoserine). The residue at position 4632 (T4632) is a Phosphothreonine. A Phosphoserine modification is found at S4653.

This sequence belongs to the LDLR family. In terms of assembly, binds plasminogen, extracellular matrix components, plasminogen activator-plasminogen activator inhibitor type I complex, apolipoprotein E-enriched beta-VLDL, lipoprotein lipase, lactoferrin, CLU/clusterin and calcium. Forms a multimeric complex together with LRPAP1. Interacts (via PxLPxI/L motif) with ANKRA2 (via ankyrin repeats). Interacts with LRP2BP. Interacts (via NPXY motif) with DAB2; the interaction is not affected by tyrosine phosphorylation of the NPXY motif. Interacts with MB. Interacts with BMP4. Interacts with the Sonic hedgehog protein N-product which is the active product of SHH. Interacts with CST3 in a calcium-dependent manner. Interacts with the vitamin-D binding protein GC/DBP. Interacts with sex hormone-binding protein SHBG. Interacts with angiotensin-2. Also interacts with angiotensin 1-7. Interacts with APOM. Interacts with selenoprotein SEPP1. Interacts with LEP. Interacts with ALB. Interacts with the antiapoptotic protein BIRC5/survivin. Interacts with matrix metalloproteinase MMP2 in complex with metalloproteinase inhibitor TIMP1. In neurons, forms a trimeric complex with APP and APPB1/FE65. Interacts with LDLRAP1/ARH; mediates trafficking of LRP2 to the endocytic recycling compartment. Does not interact with beta-amyloid protein 40 alone but interacts with the complex composed of beta-amyloid protein 40 and CLU/APOJ. Interacts with MDK. In terms of processing, a fraction undergoes proteolytic cleavage of the extracellular domain at the cell membrane to generate a cytoplasmic tail fragment. This is internalized into the early endosome from where it trafficks in an LDLRAP1/ARH-dependent manner to the endocytic recycling compartment (ERC). In the ERC, it is further cleaved by gamma-secretase to release a fragment which translocates to the nucleus and mediates transcriptional repression. Post-translationally, N-glycosylation is required for ligand binding. In terms of tissue distribution, expressed in first and third trimester cytotrophoblasts in the placenta (at protein level). Absorptive epithelia, including renal proximal tubules.

Its subcellular location is the apical cell membrane. The protein resides in the endosome lumen. The protein localises to the membrane. It is found in the coated pit. It localises to the cell projection. Its subcellular location is the dendrite. The protein resides in the axon. In terms of biological role, multiligand endocytic receptor. Acts together with CUBN to mediate endocytosis of high-density lipoproteins. Mediates receptor-mediated uptake of polybasic drugs such as aprotinin, aminoglycosides and polymyxin B. In the kidney, mediates the tubular uptake and clearance of leptin. Also mediates transport of leptin across the blood-brain barrier through endocytosis at the choroid plexus epithelium. Endocytosis of leptin in neuronal cells is required for hypothalamic leptin signaling and leptin-mediated regulation of feeding and body weight. Mediates endocytosis and subsequent lysosomal degradation of CST3 in kidney proximal tubule cells. Mediates renal uptake of 25-hydroxyvitamin D3 in complex with the vitamin D3 transporter GC/DBP. Mediates renal uptake of metallothionein-bound heavy metals. Together with CUBN, mediates renal reabsorption of myoglobin. Mediates renal uptake and subsequent lysosomal degradation of APOM. Plays a role in kidney selenium homeostasis by mediating renal endocytosis of selenoprotein SEPP1. Mediates renal uptake of the antiapoptotic protein BIRC5/survivin which may be important for functional integrity of the kidney. Mediates renal uptake of matrix metalloproteinase MMP2 in complex with metalloproteinase inhibitor TIMP1. Mediates endocytosis of Sonic hedgehog protein N-product (ShhN), the active product of SHH. Also mediates ShhN transcytosis. In the embryonic neuroepithelium, mediates endocytic uptake and degradation of BMP4, is required for correct SHH localization in the ventral neural tube and plays a role in patterning of the ventral telencephalon. Required at the onset of neurulation to sequester SHH on the apical surface of neuroepithelial cells of the rostral diencephalon ventral midline and to control PTCH1-dependent uptake and intracellular trafficking of SHH. During neurulation, required in neuroepithelial cells for uptake of folate bound to the folate receptor FOLR1 which is necessary for neural tube closure. In the adult brain, negatively regulates BMP signaling in the subependymal zone which enables neurogenesis to proceed. In astrocytes, mediates endocytosis of ALB which is required for the synthesis of the neurotrophic factor oleic acid. Involved in neurite branching. During optic nerve development, required for SHH-mediated migration and proliferation of oligodendrocyte precursor cells. Mediates endocytic uptake and clearance of SHH in the retinal margin which protects retinal progenitor cells from mitogenic stimuli and keeps them quiescent. Plays a role in reproductive organ development by mediating uptake in reproductive tissues of androgen and estrogen bound to the sex hormone binding protein SHBG. Mediates endocytosis of angiotensin-2. Also mediates endocytosis of angiotensis 1-7. Binds to the complex composed of beta-amyloid protein 40 and CLU/APOJ and mediates its endocytosis and lysosomal degradation. Required for embryonic heart development. Required for normal hearing, possibly through interaction with estrogen in the inner ear. This Homo sapiens (Human) protein is Low-density lipoprotein receptor-related protein 2.